We begin with the raw amino-acid sequence, 66 residues long: MTQLEEQLHNVETVRSITMQLEMALTKLKKDMMRGGDAKQYQVWQRESKALESAIAIIHYVAGDLK.

The protein belongs to the YscE family. Component of the heterodimeric YscE-YscG chaperone. The YscE-YscG chaperone forms a stable ternary complex with YscF/SctF. YscE interacts with YscG, but makes very little direct contact with YscF. Homodimer in solution.

Its subcellular location is the cytoplasm. Functionally, chaperone of the type III secretion system (T3SS), also called injectisome, which is used to inject bacterial effector proteins into eukaryotic host cells. Along with YscG, prevents premature polymerization of the YscF/SctF needle protein within the cytoplasm. Is also required for stable expression of cytosolic YscF and for YscF secretion. Likely plays a role in targeting YscF present in the cytosolic YscEFG complex to the T3SS apparatus. Required for Yop secretion. This Yersinia pestis protein is Type 3 secretion system chaperone YscE.